Consider the following 136-residue polypeptide: T-cell receptor alpha chain constant (136 aa).

The region spanning 19-103 (STLCLFTDFD…LTEKSFETDM (85 aa)) is the Ig-like C1-type domain. A disulfide bridge connects residues Cys22 and Cys72. 3 N-linked (GlcNAc...) asparagine glycosylation sites follow: Asn66, Asn80, and Asn109. The segment at 90 to 111 (CDATLTEKSFETDMNLNFQNLS) is connecting peptide. Residues 111–131 (SVMGLRILLLKVAGFNLLMTL) form a helical membrane-spanning segment. Residues 132–136 (RLWSS) lie on the Cytoplasmic side of the membrane.

As to quaternary structure, alpha-beta TR is a heterodimer composed of an alpha and beta chain; disulfide-linked. The alpha-beta TR is associated with the transmembrane signaling CD3 coreceptor proteins to form the TR-CD3 (TcR or TCR). The assembly of alpha-beta TR heterodimers with CD3 occurs in the endoplasmic reticulum where a single alpha-beta TR heterodimer associates with one CD3D-CD3E heterodimer, one CD3G-CD3E heterodimer and one CD247 homodimer forming a stable octameric structure. CD3D-CD3E and CD3G-CD3E heterodimers preferentially associate with TR alpha and TR beta chains, respectively. The association of the CD247 homodimer is the last step of TcR assembly in the endoplasmic reticulum and is required for transport to the cell surface.

The protein localises to the cell membrane. In terms of biological role, constant region of T cell receptor (TR) alpha chain. Alpha-beta T cell receptors are antigen specific receptors which are essential to the immune response and are present on the cell surface of T lymphocytes. Recognize peptide-major histocompatibility (MH) (pMH) complexes that are displayed by antigen presenting cells (APC), a prerequisite for efficient T cell adaptive immunity against pathogens. Binding of alpha-beta TR to pMH complex initiates TR-CD3 clustering on the cell surface and intracellular activation of LCK that phosphorylates the ITAM motifs of CD3G, CD3D, CD3E and CD247 enabling the recruitment of ZAP70. In turn, ZAP70 phosphorylates LAT, which recruits numerous signaling molecules to form the LAT signalosome. The LAT signalosome propagates signal branching to three major signaling pathways, the calcium, the mitogen-activated protein kinase (MAPK) kinase and the nuclear factor NF-kappa-B (NF-kB) pathways, leading to the mobilization of transcription factors that are critical for gene expression and essential for T cell growth and differentiation. The T cell repertoire is generated in the thymus, by V-(D)-J rearrangement. This repertoire is then shaped by intrathymic selection events to generate a peripheral T cell pool of self-MH restricted, non-autoaggressive T cells. Post-thymic interaction of alpha-beta TR with the pMH complexes shapes TR structural and functional avidity. In Mus musculus (Mouse), this protein is T-cell receptor alpha chain constant.